The primary structure comprises 438 residues: Proline--tRNA ligase (438 aa).

Belongs to the class-II aminoacyl-tRNA synthetase family. ProS type 2 subfamily. In terms of assembly, homodimer.

Its subcellular location is the cytoplasm. The catalysed reaction is tRNA(Pro) + L-proline + ATP = L-prolyl-tRNA(Pro) + AMP + diphosphate. Functionally, catalyzes the attachment of proline to tRNA(Pro) in a two-step reaction: proline is first activated by ATP to form Pro-AMP and then transferred to the acceptor end of tRNA(Pro). This chain is Proline--tRNA ligase, found in Gluconobacter oxydans (strain 621H) (Gluconobacter suboxydans).